We begin with the raw amino-acid sequence, 347 residues long: Histidinol-phosphate aminotransferase (347 aa).

An N6-(pyridoxal phosphate)lysine modification is found at K209.

It belongs to the class-II pyridoxal-phosphate-dependent aminotransferase family. Histidinol-phosphate aminotransferase subfamily. In terms of assembly, homodimer. Requires pyridoxal 5'-phosphate as cofactor.

It catalyses the reaction L-histidinol phosphate + 2-oxoglutarate = 3-(imidazol-4-yl)-2-oxopropyl phosphate + L-glutamate. Its pathway is amino-acid biosynthesis; L-histidine biosynthesis; L-histidine from 5-phospho-alpha-D-ribose 1-diphosphate: step 7/9. This chain is Histidinol-phosphate aminotransferase, found in Geotalea daltonii (strain DSM 22248 / JCM 15807 / FRC-32) (Geobacter daltonii).